Here is a 145-residue protein sequence, read N- to C-terminus: Peptide methionine sulfoxide reductase MsrB (145 aa).

A MsrB domain is found at 6-129; sequence EEELKQTLTD…NAAALRFVPV (124 aa). C118 (nucleophile) is an active-site residue.

The protein belongs to the MsrB Met sulfoxide reductase family.

It carries out the reaction L-methionyl-[protein] + [thioredoxin]-disulfide + H2O = L-methionyl-(R)-S-oxide-[protein] + [thioredoxin]-dithiol. The chain is Peptide methionine sulfoxide reductase MsrB from Enterococcus faecalis (strain ATCC 700802 / V583).